The following is a 795-amino-acid chain: Lon protease (795 aa).

Residues 7–213 (SQILVVRGQV…KIIQAGIEDL (207 aa)) enclose the Lon N-terminal domain. Position 379-386 (379-386 (GPPGVGKS)) interacts with ATP. Positions 615-795 (VSLPGIVNGM…YSDIYNKLFS (181 aa)) constitute a Lon proteolytic domain. Residues Ser-702 and Lys-745 contribute to the active site.

Belongs to the peptidase S16 family. As to quaternary structure, homohexamer. Organized in a ring with a central cavity.

It localises to the cytoplasm. It catalyses the reaction Hydrolysis of proteins in presence of ATP.. In terms of biological role, ATP-dependent serine protease that mediates the selective degradation of mutant and abnormal proteins as well as certain short-lived regulatory proteins. Required for cellular homeostasis and for survival from DNA damage and developmental changes induced by stress. Degrades polypeptides processively to yield small peptide fragments that are 5 to 10 amino acids long. Binds to DNA in a double-stranded, site-specific manner. This Mycoplasma genitalium (strain ATCC 33530 / DSM 19775 / NCTC 10195 / G37) (Mycoplasmoides genitalium) protein is Lon protease.